The sequence spans 227 residues: Cytochrome c oxidase subunit 2 (227 aa).

The Mitochondrial intermembrane portion of the chain corresponds to 1–14 (MAYPFELGFQDATS). A helical membrane pass occupies residues 15–45 (PIMEELLHFHDHTLMIVFLISSLVLYIISLM). The Mitochondrial matrix segment spans residues 46 to 59 (LTTKLTHTSTMDAQ). A helical transmembrane segment spans residues 60-87 (EVETIWTILPAIILILIALPSLRVLYMM). Residues 88 to 227 (DEINDPSLTV…HFENWSSSML (140 aa)) lie on the Mitochondrial intermembrane side of the membrane. H161, C196, E198, C200, H204, and M207 together coordinate Cu cation. Mg(2+) is bound at residue E198.

This sequence belongs to the cytochrome c oxidase subunit 2 family. Component of the cytochrome c oxidase (complex IV, CIV), a multisubunit enzyme composed of 14 subunits. The complex is composed of a catalytic core of 3 subunits MT-CO1, MT-CO2 and MT-CO3, encoded in the mitochondrial DNA, and 11 supernumerary subunits COX4I, COX5A, COX5B, COX6A, COX6B, COX6C, COX7A, COX7B, COX7C, COX8 and NDUFA4, which are encoded in the nuclear genome. The complex exists as a monomer or a dimer and forms supercomplexes (SCs) in the inner mitochondrial membrane with NADH-ubiquinone oxidoreductase (complex I, CI) and ubiquinol-cytochrome c oxidoreductase (cytochrome b-c1 complex, complex III, CIII), resulting in different assemblies (supercomplex SCI(1)III(2)IV(1) and megacomplex MCI(2)III(2)IV(2)). Found in a complex with TMEM177, COA6, COX18, COX20, SCO1 and SCO2. Interacts with TMEM177 in a COX20-dependent manner. Interacts with COX20. Interacts with COX16. It depends on Cu cation as a cofactor.

The protein resides in the mitochondrion inner membrane. The enzyme catalyses 4 Fe(II)-[cytochrome c] + O2 + 8 H(+)(in) = 4 Fe(III)-[cytochrome c] + 2 H2O + 4 H(+)(out). Component of the cytochrome c oxidase, the last enzyme in the mitochondrial electron transport chain which drives oxidative phosphorylation. The respiratory chain contains 3 multisubunit complexes succinate dehydrogenase (complex II, CII), ubiquinol-cytochrome c oxidoreductase (cytochrome b-c1 complex, complex III, CIII) and cytochrome c oxidase (complex IV, CIV), that cooperate to transfer electrons derived from NADH and succinate to molecular oxygen, creating an electrochemical gradient over the inner membrane that drives transmembrane transport and the ATP synthase. Cytochrome c oxidase is the component of the respiratory chain that catalyzes the reduction of oxygen to water. Electrons originating from reduced cytochrome c in the intermembrane space (IMS) are transferred via the dinuclear copper A center (CU(A)) of subunit 2 and heme A of subunit 1 to the active site in subunit 1, a binuclear center (BNC) formed by heme A3 and copper B (CU(B)). The BNC reduces molecular oxygen to 2 water molecules using 4 electrons from cytochrome c in the IMS and 4 protons from the mitochondrial matrix. This is Cytochrome c oxidase subunit 2 (MT-CO2) from Sciurus carolinensis (Eastern gray squirrel).